The primary structure comprises 191 residues: Potassium-transporting ATPase KdpC subunit (191 aa).

Residues I10–A30 traverse the membrane as a helical segment.

Belongs to the KdpC family. As to quaternary structure, the system is composed of three essential subunits: KdpA, KdpB and KdpC.

Its subcellular location is the cell inner membrane. In terms of biological role, part of the high-affinity ATP-driven potassium transport (or Kdp) system, which catalyzes the hydrolysis of ATP coupled with the electrogenic transport of potassium into the cytoplasm. This subunit acts as a catalytic chaperone that increases the ATP-binding affinity of the ATP-hydrolyzing subunit KdpB by the formation of a transient KdpB/KdpC/ATP ternary complex. This Bacteroides fragilis (strain YCH46) protein is Potassium-transporting ATPase KdpC subunit.